The chain runs to 627 residues: Pentatricopeptide repeat-containing protein At2g15630, mitochondrial (627 aa).

The N-terminal 29 residues, 1-29, are a transit peptide targeting the mitochondrion; it reads MRRFTVPCILRHRISILSGAGYSPAAARL. PPR repeat units follow at residues 154–188, 189–223, 224–258, 259–293, 294–324, 326–360, 361–395, 396–430, 431–465, 466–500, 501–535, 536–570, and 571–605; these read STILFDLLVRCCCQLRMVDEAIECFYLMKEKGFYP, KTETCNHILTLLSRLNRIENAWVFYADMYRMEIKS, NVYTFNIMINVLCKEGKLKKAKGFLGIMEVFGIKP, TIVTYNTLVQGFSLRGRIEGARLIISEMKSKGFQP, DMQTYNPILSWMCNEGRASEVLREMKEIGLV, DSVSYNILIRGCSNNGDLEMAFAYRDEMVKQGMVP, TFYTYNTLIHGLFMENKIEAAEILIREIREKGIVL, DSVTYNILINGYCQHGDAKKAFALHDEMMTDGIQP, TQFTYTSLIYVLCRKNKTREADELFEKVVGKGMKP, DLVMMNTLMDGHCAIGNMDRAFSLLKEMDMMSINP, DDVTYNCLMRGLCGEGKFEEARELMGEMKRRGIKP, DHISYNTLISGYSKKGDTKHAFMVRDEMLSLGFNP, and TLLTYNALLKGLSKNQEGELAEELLREMKSEGIVP.

The protein belongs to the PPR family. P subfamily.

It localises to the mitochondrion. The protein is Pentatricopeptide repeat-containing protein At2g15630, mitochondrial of Arabidopsis thaliana (Mouse-ear cress).